Here is a 125-residue protein sequence, read N- to C-terminus: Holo-[acyl-carrier-protein] synthase (125 aa).

Positions 8 and 57 each coordinate Mg(2+).

The protein belongs to the P-Pant transferase superfamily. AcpS family. The cofactor is Mg(2+).

The protein resides in the cytoplasm. The enzyme catalyses apo-[ACP] + CoA = holo-[ACP] + adenosine 3',5'-bisphosphate + H(+). Transfers the 4'-phosphopantetheine moiety from coenzyme A to a Ser of acyl-carrier-protein. The polypeptide is Holo-[acyl-carrier-protein] synthase (Natranaerobius thermophilus (strain ATCC BAA-1301 / DSM 18059 / JW/NM-WN-LF)).